The primary structure comprises 1437 residues: uncharacterized protein (1437 aa).

The N-terminal stretch at 1 to 25 is a signal peptide; the sequence is MRRGCRHHLAAVVLLIATFPPLAYN. Over 26-1326 the chain is Extracellular; that stretch reads QNIGGINQNI…SRIKENYFKW (1301 aa). 7 N-linked (GlcNAc...) asparagine glycosylation sites follow: N103, N315, N364, N492, N605, N676, and N914. Residues 193-356 enclose the NIDO domain; it reads AFFGQQASQA…GRYMFRVDDV (164 aa). An AMOP domain is found at 648 to 829; the sequence is VKEKSREMCH…FRCQMFYWRR (182 aa). Residues 1327-1347 traverse the membrane as a helical segment; the sequence is LAVIAGIVGIIIVILLIFLVF. Residues 1348 to 1437 lie on the Cytoplasmic side of the membrane; it reads WCIKRKKLQE…QGMLGLNTSV (90 aa). Positions 1394-1419 are disordered; that stretch reads PRTVAMPPPRGTTATPMTLEPRGFSP.

The protein resides in the membrane. This is an uncharacterized protein from Caenorhabditis elegans.